The sequence spans 358 residues: Dual-specificity RNA methyltransferase RlmN (358 aa).

Glu86 serves as the catalytic Proton acceptor. In terms of domain architecture, Radical SAM core spans 105 to 338 (RHKRYTICVS…CTIRQSKGLD (234 aa)). Cys112 and Cys343 are disulfide-bonded. [4Fe-4S] cluster-binding residues include Cys119, Cys123, and Cys126. S-adenosyl-L-methionine-binding positions include 169–170 (GE), Ser201, 224–226 (SLH), and Asn300. Cys343 functions as the S-methylcysteine intermediate in the catalytic mechanism.

The protein belongs to the radical SAM superfamily. RlmN family. Requires [4Fe-4S] cluster as cofactor.

It localises to the cytoplasm. The enzyme catalyses adenosine(2503) in 23S rRNA + 2 reduced [2Fe-2S]-[ferredoxin] + 2 S-adenosyl-L-methionine = 2-methyladenosine(2503) in 23S rRNA + 5'-deoxyadenosine + L-methionine + 2 oxidized [2Fe-2S]-[ferredoxin] + S-adenosyl-L-homocysteine. It catalyses the reaction adenosine(37) in tRNA + 2 reduced [2Fe-2S]-[ferredoxin] + 2 S-adenosyl-L-methionine = 2-methyladenosine(37) in tRNA + 5'-deoxyadenosine + L-methionine + 2 oxidized [2Fe-2S]-[ferredoxin] + S-adenosyl-L-homocysteine. In terms of biological role, specifically methylates position 2 of adenine 2503 in 23S rRNA and position 2 of adenine 37 in tRNAs. m2A2503 modification seems to play a crucial role in the proofreading step occurring at the peptidyl transferase center and thus would serve to optimize ribosomal fidelity. In Campylobacter hominis (strain ATCC BAA-381 / DSM 21671 / CCUG 45161 / LMG 19568 / NCTC 13146 / CH001A), this protein is Dual-specificity RNA methyltransferase RlmN.